The primary structure comprises 123 residues: Basic myotoxic phospholipase A2 PhTX-II (123 aa).

7 disulfides stabilise this stretch: C26/C116, C28/C45, C44/C95, C50/C123, C51/C88, C58/C81, and C75/C86. The Ca(2+) site is built by Y27, G29, and G31. H48 is a catalytic residue. D49 is a Ca(2+) binding site. D89 is a catalytic residue.

As to quaternary structure, monomer. Requires Ca(2+) as cofactor. In terms of tissue distribution, expressed by the venom gland.

Its subcellular location is the secreted. The catalysed reaction is a 1,2-diacyl-sn-glycero-3-phosphocholine + H2O = a 1-acyl-sn-glycero-3-phosphocholine + a fatty acid + H(+). Its activity is regulated as follows. P-bromophenacyl bromide (BPB) completely inhibits the catalytic and edematogenic activities. Enzymatic activity is also diminished by EDTA, heparin and crotapotins F2 and F3 from C.d.collilineatus. Inhibited by divalent cations different from calcium ions (cadmium, magnesium, manganese, zinc), since they act as competitive antagonists of this cofactor. Functionally, snake venom phospholipase A2 (PLA2) that induces myotoxicity and local edema in mice. In addition, it causes neuromuscular blockade in avian neuromuscular preparations with a significant direct action on skeletal muscle function. Myotoxic action is exerted by both enzymatic and non-enzymatic mechanisms. PLA2 catalyzes the calcium-dependent hydrolysis of the 2-acyl groups in 3-sn-phosphoglycerides. This is Basic myotoxic phospholipase A2 PhTX-II from Bothrocophias hyoprora (Amazonian hognose viper).